The chain runs to 183 residues: NEDD8-conjugating enzyme Ubc12 (183 aa).

N-acetylmethionine is present on Met-1. Residues 1 to 29 are disordered; that stretch reads MIKLFSLKQQKKEEESAGGTKGSSKKASA. The interaction with UBA3 stretch occupies residues 1–57; it reads MIKLFSLKQQKKEEESAGGTKGSSKKASAAQLRIQKDINELNLPKTCDISFSDPDDL. An N6-acetyllysine modification is found at Lys-3. A UBC core domain is found at 29–173; that stretch reads AAQLRIQKDI…VQRSMRGGYI (145 aa). Position 50 is a phosphoserine (Ser-50). Cys-111 (glycyl thioester intermediate) is an active-site residue. Arg-169 bears the Asymmetric dimethylarginine; alternate mark. Arg-169 is subject to Omega-N-methylarginine; alternate.

Belongs to the ubiquitin-conjugating enzyme family. UBC12 subfamily. Interacts with UBA3 and RBX1. Interacts (N-terminally acetylated form) with (via DCUN1 domain) DCUN1D1, DCUN1D2, DCUN1D3, DCUN1D4 and DCUN1D5. In terms of processing, the acetylation of Met-1 increases affinity for DCUN1D1 by about 2 orders of magnitude and is crucial for NEDD8 transfer to cullins.

It carries out the reaction [E1 NEDD8-activating enzyme]-S-[NEDD8 protein]-yl-L-cysteine + [E2 NEDD8-conjugating enzyme]-L-cysteine = [E1 NEDD8-activating enzyme]-L-cysteine + [E2 NEDD8-conjugating enzyme]-S-[NEDD8-protein]-yl-L-cysteine.. The protein operates within protein modification; protein neddylation. In terms of biological role, accepts the ubiquitin-like protein NEDD8 from the UBA3-NAE1 E1 complex and catalyzes its covalent attachment to other proteins. The specific interaction with the E3 ubiquitin ligase RBX1, but not RBX2, suggests that the RBX1-UBE2M complex neddylates specific target proteins, such as CUL1, CUL2, CUL3 and CUL4. Involved in cell proliferation. In Mus musculus (Mouse), this protein is NEDD8-conjugating enzyme Ubc12 (Ube2m).